A 128-amino-acid chain; its full sequence is Large ribosomal subunit protein bL20 (128 aa).

The protein belongs to the bacterial ribosomal protein bL20 family.

In terms of biological role, binds directly to 23S ribosomal RNA and is necessary for the in vitro assembly process of the 50S ribosomal subunit. It is not involved in the protein synthesizing functions of that subunit. This is Large ribosomal subunit protein bL20 from Kocuria rhizophila (strain ATCC 9341 / DSM 348 / NBRC 103217 / DC2201).